The primary structure comprises 343 residues: Protein RecA (343 aa).

ATP is bound at residue 65-72; the sequence is GPESSGKT.

The protein belongs to the RecA family.

It localises to the cytoplasm. Functionally, can catalyze the hydrolysis of ATP in the presence of single-stranded DNA, the ATP-dependent uptake of single-stranded DNA by duplex DNA, and the ATP-dependent hybridization of homologous single-stranded DNAs. It interacts with LexA causing its activation and leading to its autocatalytic cleavage. The polypeptide is Protein RecA (Campylobacter jejuni subsp. doylei (strain ATCC BAA-1458 / RM4099 / 269.97)).